The chain runs to 73 residues: U-scoloptoxin(22)-Cw1a (73 aa).

A signal peptide spans 1-24 (MRRFVFLAFVLVLFVIANLDSSSA).

Belongs to the scoloptoxin-22 family. In terms of processing, contains 1 disulfide bond. In terms of tissue distribution, expressed by the venom gland.

The protein resides in the secreted. The chain is U-scoloptoxin(22)-Cw1a from Cormocephalus westwoodi (Westwood's green centipede).